Consider the following 304-residue polypeptide: E3 ubiquitin-protein ligase RNF115 (304 aa).

N-acetylalanine is present on A2. Positions P95–S138 are disordered. Positions Q98–H110 are enriched in basic and acidic residues. Residues S132 and S133 each carry the phosphoserine; by PKB/AKT1 modification. The segment at C228–R269 adopts an RING-type zinc-finger fold. Positions L272–F304 are disordered. Positions R279–S296 are enriched in polar residues.

As to quaternary structure, interacts with RAB7A. Interacts with EGFR and FLT3. Interacts with BST2. Interacts with STX17. Interacts with YWHAE. Post-translationally, phosphorylated by AKT1, allowing association with the 14-3-3 chaperones that facilitates associating with TLRs. RING-type zinc finger-dependent and E2-dependent autoubiquitination. In terms of processing, deubiquitinated by USP9X; antogonizing its autoubiquitination and subsequent proteasomal degradation. Expressed at extremely low levels in normal breast, prostate, lung, colon. Higher levels of expression are detected in heart, skeletal muscle, testis as well as in breast and prostate cancer cells.

It localises to the cytoplasm. It is found in the nucleus. Its subcellular location is the endoplasmic reticulum. The protein resides in the golgi apparatus. It carries out the reaction S-ubiquitinyl-[E2 ubiquitin-conjugating enzyme]-L-cysteine + [acceptor protein]-L-lysine = [E2 ubiquitin-conjugating enzyme]-L-cysteine + N(6)-ubiquitinyl-[acceptor protein]-L-lysine.. Its pathway is protein modification; protein ubiquitination. Its function is as follows. E3 ubiquitin-protein ligase that catalyzes the 'Lys-48'- and/or 'Lys-63'-linked polyubiquitination of various substrates and thereby plays a role in a number of signaling pathways including autophagy, innate immunity, cell proliferation and cell death. Plays a role in the endosomal trafficking and degradation of membrane receptors including EGFR, FLT3, MET and CXCR4 through their polyubiquitination. Participates together with BST2 in antiviral immunity by facilitating the internalization of HIV-1 virions into intracellular vesicles leading to their lysosomal degradation. Also possesses an antiviral activity independently of BST2 by promoting retroviral GAG proteins ubiquitination, redistribution to endo-lysosomal compartments and, ultimately, lysosomal degradation. Catalyzes distinct types of ubiquitination on MAVS and STING1 at different phases of viral infection to promote innate antiviral response. Mediates the 'Lys-48'-linked ubiquitination of MAVS leading to its proteasomal degradation and ubiquitinates STING1 via 'Lys-63'-linked polyubiquitination, critical for its oligomerization and the subsequent recruitment of TBK1. Plays a positive role in the autophagosome-lysosome fusion by interacting with STX17 and enhancing its stability without affecting 'Lys-48'- or 'Lys-63'-linked polyubiquitination levels, which in turn promotes autophagosome maturation. Negatively regulates TLR-induced expression of proinflammatory cytokines by catalyzing 'Lys-11'-linked ubiquitination of RAB1A and RAB13 to inhibit post-ER trafficking of TLRs to the Golgi by RAB1A and subsequently from the Golgi apparatus to the cell surface by RAB13. The chain is E3 ubiquitin-protein ligase RNF115 from Homo sapiens (Human).